Consider the following 464-residue polypeptide: Keratin, type I cytoskeletal 28 (464 aa).

Positions 1–85 (MSLRFSSGSR…GSEGGLFSGN (85 aa)) are head. A coil 1A region spans residues 86–121 (EKVTMQNLNDRLASYLDNVRALEEANAELERKIKSW). Residues 86-401 (EKVTMQNLND…RLIDGDRNSC (316 aa)) form the IF rod domain. The segment at 122–143 (YEKHGPGSCHGLDHDYSRYHLT) is linker 1. The coil 1B stretch occupies residues 144–235 (IEDLKNKIIS…KNHEEEVKAL (92 aa)). The linker 12 stretch occupies residues 236 to 258 (QCVAGGNVNVEMNAAPGVDLTLL). The interval 259 to 397 (LNNMRAEYED…ETYCRLIDGD (139 aa)) is coil 2. Positions 398–464 (RNSCSKSKGF…NGKTKQRVPF (67 aa)) are tail. Residues 402 to 417 (SKSKGFGSGSPGNSSK) show a composition bias toward low complexity. 2 disordered regions span residues 402-422 (SKSKGFGSGSPGNSSKDLSRT) and 440-464 (SSRVQSIEEKTSKMTNGKTKQRVPF).

The protein belongs to the intermediate filament family. In terms of assembly, heterotetramer of two type I and two type II keratins.

It is found in the cytoplasm. In terms of biological role, essential for the proper assembly of types I and II keratin protein complexes and the formation of keratin intermediate filaments in the inner root sheath (irs). This is Keratin, type I cytoskeletal 28 from Bos taurus (Bovine).